A 339-amino-acid chain; its full sequence is MAASALYACTKCTQRYPFEELSQGQQLCKECRIAHPIVKCTYCRSEFQQESKTNTICKKCAQNVKQFGTPKPCQYCNIIAAFIGTKCQRCTNSEKKYGAPQTCEQCKQQCAFDRKEEGRRKVDGKLLCWLCTLSYKRVLQKTKEQRKSLGSSHSNSSSSSLTEKDQHHSKHHHHHHHHHHRHSSGHHKVSSLSPEQEQGLWKQSHKSSAAIQNETPKKKPKLESKPSNGDSSSINQSADSGGTDNFVLISQLKEEVMSLKRLLQQRDQTILEKDKKLTELKADFQYQESNLRTKMNSMEKAHKETVEQLQAKNRELLKQVAALSKGKKFDKSGSVLTSP.

An N-acetylalanine modification is found at Ala-2. Phosphoserine is present on residues Ser-22 and Ser-148. The segment at 144-243 (EQRKSLGSSH…INQSADSGGT (100 aa)) is disordered. The span at 148 to 160 (SLGSSHSNSSSSS) shows a compositional bias: low complexity. A compositionally biased stretch (basic residues) spans 167-189 (HHSKHHHHHHHHHHRHSSGHHKV). The residue at position 193 (Ser-193) is a Phosphoserine. Thr-215 bears the Phosphothreonine mark. Over residues 215–224 (TPKKKPKLES) the composition is skewed to basic and acidic residues. Positions 228–243 (NGDSSSINQSADSGGT) are enriched in polar residues. Residues 248–328 (LISQLKEEVM…QVAALSKGKK (81 aa)) adopt a coiled-coil conformation.

The protein belongs to the FAM76 family. In terms of assembly, interacts with HNRNPA2B1 (via C-terminus); the interaction results in retention of HNRNPA2B1 in the nucleus and inhibition of the NF-kappa-B-mediated inflammatory pathway.

The protein localises to the nucleus speckle. In terms of biological role, negatively regulates the NF-kappa-B-mediated inflammatory pathway by preventing the translocation of HNRNPA2B1 from the nucleus to the cytoplasm. Inhibits the PI3K/Akt/NF-kappa-B pathway-mediated polarization of M1 macrophages by binding to and stabilizing PIK3CD mRNA, resulting in increased levels of PIK3CD protein and increased levels of phosphorylated downstream target AKT which leads to decreased NF-kappa-B signaling. The sequence is that of Protein FAM76B (Fam76b) from Mus musculus (Mouse).